The following is a 229-amino-acid chain: Cytidylate kinase (229 aa).

12-20 (GPSGTGKSS) lines the ATP pocket.

The protein belongs to the cytidylate kinase family. Type 1 subfamily.

The protein resides in the cytoplasm. It carries out the reaction CMP + ATP = CDP + ADP. It catalyses the reaction dCMP + ATP = dCDP + ADP. This Rhodococcus jostii (strain RHA1) protein is Cytidylate kinase.